A 341-amino-acid chain; its full sequence is Anthranilate phosphoribosyltransferase (341 aa).

5-phospho-alpha-D-ribose 1-diphosphate is bound by residues G79, 82–83, T87, 89–92, 107–115, and S119; these read GD, NIST, and KHGNRSISS. Residue G79 participates in anthranilate binding. S91 provides a ligand contact to Mg(2+). N110 lines the anthranilate pocket. R164 contacts anthranilate. D222 and E223 together coordinate Mg(2+).

The protein belongs to the anthranilate phosphoribosyltransferase family. As to quaternary structure, homodimer. It depends on Mg(2+) as a cofactor.

It catalyses the reaction N-(5-phospho-beta-D-ribosyl)anthranilate + diphosphate = 5-phospho-alpha-D-ribose 1-diphosphate + anthranilate. It participates in amino-acid biosynthesis; L-tryptophan biosynthesis; L-tryptophan from chorismate: step 2/5. Its function is as follows. Catalyzes the transfer of the phosphoribosyl group of 5-phosphorylribose-1-pyrophosphate (PRPP) to anthranilate to yield N-(5'-phosphoribosyl)-anthranilate (PRA). This is Anthranilate phosphoribosyltransferase from Blochmanniella pennsylvanica (strain BPEN).